The sequence spans 743 residues: Inhibitor of nuclear factor kappa-B kinase subunit alpha (743 aa).

In terms of domain architecture, Protein kinase spans tryptophan 15–valine 300. ATP contacts are provided by residues leucine 21–valine 29 and lysine 44. Aspartate 144 acts as the Proton acceptor in catalysis. The leucine-zipper stretch occupies residues leucine 453 to leucine 474. The NEMO-binding stretch occupies residues leucine 736–leucine 741.

It belongs to the protein kinase superfamily. Ser/Thr protein kinase family. I-kappa-B kinase subfamily.

It localises to the cytoplasm. The protein resides in the nucleus. It carries out the reaction L-seryl-[I-kappa-B protein] + ATP = O-phospho-L-seryl-[I-kappa-B protein] + ADP + H(+). Its activity is regulated as follows. Activated when phosphorylated and inactivated when dephosphorylated. Phosphorylates inhibitors of NF-kappa-B thus leading to the dissociation of the inhibitor/NF-kappa-B complex and ultimately the degradation of the inhibitor. Phosphorylates 'Ser-10' of histone H3 at NF-kappa-B-regulated promoters during inflammatory responses triggered by cytokines. This Xenopus tropicalis (Western clawed frog) protein is Inhibitor of nuclear factor kappa-B kinase subunit alpha (chuk).